A 196-amino-acid polypeptide reads, in one-letter code: dTDP-4-dehydro-6-deoxyglucose 3-epimerase (196 aa).

Substrate is bound by residues arginine 21, glutamate 26, 45-47 (QVN), and arginine 57. The Proton acceptor role is filled by histidine 60. Substrate-binding residues include lysine 70 and arginine 117. Tyrosine 130 (proton donor) is an active-site residue. Substrate is bound by residues glutamate 141 and arginine 166.

It belongs to the dTDP-4-dehydrorhamnose 3,5-epimerase family. In terms of assembly, homodimer.

The catalysed reaction is dTDP-4-dehydro-6-deoxy-alpha-D-glucose = dTDP-4-dehydro-6-deoxy-alpha-D-allose. It participates in antibiotic biosynthesis. Involved in the biosynthesis of dTDP-6-deoxy-D-allose, an intermediate in the biosynthesis of mycinose, which is one of the two unusual sugars attached to the 16-membered macrolactone ring of the aglycone antibiotic dihydrochalcomycin (GERI-155). Catalyzes the conversion of dTDP-4-oxo-6-deoxyglucose to dTDP-4-oxo-6-deoxyallose, via a C-3 epimerization. The chain is dTDP-4-dehydro-6-deoxyglucose 3-epimerase from Streptomyces sp.